The chain runs to 150 residues: Large ribosomal subunit protein uL13 (150 aa).

Belongs to the universal ribosomal protein uL13 family. Part of the 50S ribosomal subunit.

This protein is one of the early assembly proteins of the 50S ribosomal subunit, although it is not seen to bind rRNA by itself. It is important during the early stages of 50S assembly. In Persephonella marina (strain DSM 14350 / EX-H1), this protein is Large ribosomal subunit protein uL13.